The primary structure comprises 372 residues: GTPase Obg (372 aa).

Residues 1–159 (MKFIDEARIE…RMLKLELKVL (159 aa)) enclose the Obg domain. The segment at 128-147 (LHFKSSTNRAPRQKTDGKPG) is disordered. An OBG-type G domain is found at 160-334 (ADVGLLGMPN…LVYAIYDYLA (175 aa)). Residues 166-173 (GMPNAGKS), 191-195 (FTTLA), 213-216 (DIPG), 284-287 (NKLD), and 315-317 (SAL) each bind GTP. Residues S173 and T193 each coordinate Mg(2+).

It belongs to the TRAFAC class OBG-HflX-like GTPase superfamily. OBG GTPase family. As to quaternary structure, monomer. It depends on Mg(2+) as a cofactor.

The protein localises to the cytoplasm. Functionally, an essential GTPase which binds GTP, GDP and possibly (p)ppGpp with moderate affinity, with high nucleotide exchange rates and a fairly low GTP hydrolysis rate. Plays a role in control of the cell cycle, stress response, ribosome biogenesis and in those bacteria that undergo differentiation, in morphogenesis control. This Burkholderia thailandensis (strain ATCC 700388 / DSM 13276 / CCUG 48851 / CIP 106301 / E264) protein is GTPase Obg.